The chain runs to 605 residues: Elongation factor 4 (605 aa).

The region spanning 11–193 (KNIRNFSIIA…TLVDVIPAPT (183 aa)) is the tr-type G domain. Residues 23-28 (DHGKST) and 140-143 (NKID) contribute to the GTP site.

This sequence belongs to the TRAFAC class translation factor GTPase superfamily. Classic translation factor GTPase family. LepA subfamily.

The protein resides in the cell inner membrane. The enzyme catalyses GTP + H2O = GDP + phosphate + H(+). Functionally, required for accurate and efficient protein synthesis under certain stress conditions. May act as a fidelity factor of the translation reaction, by catalyzing a one-codon backward translocation of tRNAs on improperly translocated ribosomes. Back-translocation proceeds from a post-translocation (POST) complex to a pre-translocation (PRE) complex, thus giving elongation factor G a second chance to translocate the tRNAs correctly. Binds to ribosomes in a GTP-dependent manner. This is Elongation factor 4 from Acinetobacter baumannii (strain AB307-0294).